We begin with the raw amino-acid sequence, 226 residues long: Large ribosomal subunit protein uL1 (226 aa).

Belongs to the universal ribosomal protein uL1 family. Part of the 50S ribosomal subunit.

Binds directly to 23S rRNA. The L1 stalk is quite mobile in the ribosome, and is involved in E site tRNA release. Functionally, protein L1 is also a translational repressor protein, it controls the translation of the L11 operon by binding to its mRNA. The sequence is that of Large ribosomal subunit protein uL1 from Borreliella burgdorferi (strain ZS7) (Borrelia burgdorferi).